Here is a 201-residue protein sequence, read N- to C-terminus: Recombination protein RecR (201 aa).

The C4-type zinc finger occupies 57 to 72 (CRDCRTFTEQEVCTIC). The 96-residue stretch at 81–176 (GQICVVESPA…LASRIAHGVP (96 aa)) folds into the Toprim domain.

The protein belongs to the RecR family.

Its function is as follows. May play a role in DNA repair. It seems to be involved in an RecBC-independent recombinational process of DNA repair. It may act with RecF and RecO. This is Recombination protein RecR from Edwardsiella ictaluri (strain 93-146).